The following is a 63-amino-acid chain: Odorranain-B1 (63 aa).

A signal peptide spans 1–22 (MFTTKKPLLLLFFLGIISLSVC). Positions 23-41 (EQERDADEEDGGEVTEEEV) are excised as a propeptide.

This sequence belongs to the frog skin active peptide (FSAP) family. Brevinin subfamily. Expressed by the skin glands.

The protein localises to the secreted. This is Odorranain-B1 from Odorrana hainanensis (Odor frog).